A 380-amino-acid polypeptide reads, in one-letter code: Cytochrome b (380 aa).

4 consecutive transmembrane segments (helical) span residues 33–53 (FGSL…FLAM), 77–98 (WLIR…YLHI), 113–133 (WTIG…GYVL), and 178–198 (FFAF…IHLL). His83 and His97 together coordinate heme b. Heme b-binding residues include His182 and His196. A ubiquinone is bound at residue His201. A run of 4 helical transmembrane segments spans residues 226–246 (YKDL…ALFS), 288–308 (LGGV…PFLH), 320–340 (VTQF…WIGG), and 347–367 (FVII…VLIP).

Belongs to the cytochrome b family. The cytochrome bc1 complex contains 3 respiratory subunits (MT-CYB, CYC1 and UQCRFS1), 2 core proteins (UQCRC1 and UQCRC2) and probably 6 low-molecular weight proteins. Requires heme b as cofactor.

It is found in the mitochondrion inner membrane. Functionally, component of the ubiquinol-cytochrome c reductase complex (complex III or cytochrome b-c1 complex) that is part of the mitochondrial respiratory chain. The b-c1 complex mediates electron transfer from ubiquinol to cytochrome c. Contributes to the generation of a proton gradient across the mitochondrial membrane that is then used for ATP synthesis. The sequence is that of Cytochrome b (mt-cyb) from Kareius bicoloratus (Stone flounder).